The primary structure comprises 184 residues: Gremlin-1 (184 aa).

Positions methionine 1–glycine 24 are cleaved as a signal peptide. Asparagine 2 and asparagine 42 each carry an N-linked (GlcNAc...) asparagine glycan. The segment at glycine 24 to glutamine 78 is disordered. 4 disulfides stabilise this stretch: cysteine 94/cysteine 144, cysteine 108/cysteine 158, cysteine 118/cysteine 176, and cysteine 122/cysteine 178. Positions cysteine 94–aspartate 184 constitute a CTCK domain.

Belongs to the DAN family. In terms of assembly, homodimer; can also form homooligomers. Interacts with BMP2; can form higher oligomers with BMP2. Interacts with SLIT1 and SLIT2 in a glycosylation-dependent manner. As to expression, highly expressed in the brain, kidney, spleen, and testis and weakly expressed in the lung and liver. Predominantly expressed in differentiated cells as neurons in brain, type I cells in lung and globlet cells in intestine.

The protein resides in the secreted. In terms of biological role, cytokine that may play an important role during carcinogenesis and metanephric kidney organogenesis, as a BMP antagonist required for early limb outgrowth and patterning in maintaining the FGF4-SHH feedback loop. Down-regulates the BMP4 signaling in a dose-dependent manner. Antagonist of BMP2; inhibits BMP2-mediated differentiation of osteoblasts (in vitro). Acts as inhibitor of monocyte chemotaxis. Can inhibit the growth or viability of normal cells but not transformed cells when is overexpressed. The protein is Gremlin-1 (Grem1) of Rattus norvegicus (Rat).